Reading from the N-terminus, the 131-residue chain is Profilin-6 (131 aa).

The protein belongs to the profilin family. As to quaternary structure, occurs in many kinds of cells as a complex with monomeric actin in a 1:1 ratio.

The protein resides in the cytoplasm. It localises to the cytoskeleton. In terms of biological role, binds to actin and affects the structure of the cytoskeleton. At high concentrations, profilin prevents the polymerization of actin, whereas it enhances it at low concentrations. By binding to PIP2, it inhibits the formation of IP3 and DG. The protein is Profilin-6 of Hevea brasiliensis (Para rubber tree).